Reading from the N-terminus, the 302-residue chain is Protoheme IX farnesyltransferase 1 (302 aa).

A run of 8 helical transmembrane segments spans residues 27 to 47, 49 to 69, 98 to 118, 121 to 141, 149 to 169, 175 to 195, 228 to 248, and 281 to 301; these read VVAL…VTDF, WIQA…AAAF, SVAI…YAWV, LTAW…TMYL, IVIA…AVTG, AWLL…ALAI, LLTL…IYLF, and IYHL…GMVL.

This sequence belongs to the UbiA prenyltransferase family. Protoheme IX farnesyltransferase subfamily.

It is found in the cell inner membrane. The enzyme catalyses heme b + (2E,6E)-farnesyl diphosphate + H2O = Fe(II)-heme o + diphosphate. It functions in the pathway porphyrin-containing compound metabolism; heme O biosynthesis; heme O from protoheme: step 1/1. In terms of biological role, converts heme B (protoheme IX) to heme O by substitution of the vinyl group on carbon 2 of heme B porphyrin ring with a hydroxyethyl farnesyl side group. This is Protoheme IX farnesyltransferase 1 from Vibrio parahaemolyticus serotype O3:K6 (strain RIMD 2210633).